Consider the following 60-residue polypeptide: Large ribosomal subunit protein bL32 (60 aa).

Basic residues predominate over residues 1–20; the sequence is MAKPARHTSKAKRNKRRTHY. The interval 1-22 is disordered; the sequence is MAKPARHTSKAKRNKRRTHYKL.

It belongs to the bacterial ribosomal protein bL32 family.

This Streptococcus agalactiae serotype V (strain ATCC BAA-611 / 2603 V/R) protein is Large ribosomal subunit protein bL32.